The chain runs to 499 residues: Endoglucanase (499 aa).

Positions 1–29 (MKRSISIFITCLLITLLTMGGMLASPASA) are cleaved as a signal peptide. Residues His-65, 69-70 (WY), Tyr-96, and His-131 each bind substrate. The active-site Proton donor is the Glu-169. Tyr-231 provides a ligand contact to substrate. The active-site Nucleophile is the Glu-257. Substrate-binding positions include 263 to 264 (AS), Trp-291, and 296 to 298 (KQE). The CBM3 domain maps to 350-499 (QENGISVQYR…GKLIWGTEPN (150 aa)).

Belongs to the glycosyl hydrolase 5 (cellulase A) family.

It carries out the reaction Endohydrolysis of (1-&gt;4)-beta-D-glucosidic linkages in cellulose, lichenin and cereal beta-D-glucans.. The chain is Endoglucanase (bglC) from Bacillus subtilis.